A 297-amino-acid chain; its full sequence is Beta-1,3-galactosyltransferase 5 (297 aa).

At 1–7 (MAFPKMR) the chain is on the cytoplasmic side. Residues 8-28 (LMYVCLLVLGALCVYFSMYSL) traverse the membrane as a helical; Signal-anchor for type II membrane protein segment. Over 29–297 (NLFKEQSFVY…KPRTLLDYWQ (269 aa)) the chain is Lumenal. N130, N174, and N231 each carry an N-linked (GlcNAc...) asparagine glycan.

It belongs to the glycosyltransferase 31 family.

It is found in the golgi apparatus membrane. The enzyme catalyses a globoside Gb4Cer (d18:1(4E)) + UDP-alpha-D-galactose = a globoside GalGb4Cer (d18:1(4E)) + UDP + H(+). Its pathway is protein modification; protein glycosylation. In terms of biological role, catalyzes the transfer of Gal to GlcNAc-based acceptors with a preference for the core3 O-linked glycan GlcNAc(beta1,3)GalNAc structure. Can use glycolipid LC3Cer as an efficient acceptor. The chain is Beta-1,3-galactosyltransferase 5 (B3GALT5) from Pan troglodytes (Chimpanzee).